The sequence spans 574 residues: Sulfate adenylyltransferase (574 aa).

The N-terminal stretch occupies residues 1-169; that stretch reads MANTPHGGVL…IEAVNKLNHY (169 aa). The segment at 170–394 is catalytic; that stretch reads DYVALRYTPA…LRESNPPRAS (225 aa). Gln197 is a binding site for sulfate. ATP contacts are provided by residues 197–200 and 291–294; these read QTRN and GRDH. Catalysis depends on residues Thr198, Arg199, and Asn200. Arg199 is a binding site for sulfate. Ala295 contributes to the sulfate binding site. Val333 lines the ATP pocket. Residues 395-574 form an allosteric regulation domain; adenylyl-sulfate kinase-like region; sequence QGFTIFLTGY…LESEGYFERL (180 aa). 3'-phosphoadenylyl sulfate is bound by residues 434 to 437, Arg451, 477 to 478, and Arg516; these read DTVR and IA.

This sequence in the N-terminal section; belongs to the sulfate adenylyltransferase family. In the C-terminal section; belongs to the APS kinase family. In terms of assembly, homohexamer. Dimer of trimers.

It is found in the cytoplasm. The catalysed reaction is sulfate + ATP + H(+) = adenosine 5'-phosphosulfate + diphosphate. It participates in sulfur metabolism; hydrogen sulfide biosynthesis; sulfite from sulfate: step 1/3. With respect to regulation, allosterically inhibited by 3'-phosphoadenosine 5'-phosphosulfate (PAPS). Its function is as follows. Catalyzes the first intracellular reaction of sulfate assimilation, forming adenosine-5'-phosphosulfate (APS) from inorganic sulfate and ATP. Plays an important role in sulfate activation as a component of the biosynthesis pathway of sulfur-containing amino acids. The protein is Sulfate adenylyltransferase of Aspergillus niger.